A 187-amino-acid chain; its full sequence is Acireductone dioxygenase (187 aa).

The Fe(2+) site is built by His90, His92, Glu96, and His135. The Ni(2+) site is built by His90, His92, Glu96, and His135.

Belongs to the acireductone dioxygenase (ARD) family. The cofactor is Fe(2+). It depends on Ni(2+) as a cofactor.

The protein localises to the cytoplasm. Its subcellular location is the nucleus. It catalyses the reaction 1,2-dihydroxy-5-(methylsulfanyl)pent-1-en-3-one + O2 = 4-methylsulfanyl-2-oxobutanoate + formate + 2 H(+). It carries out the reaction 1,2-dihydroxy-5-(methylsulfanyl)pent-1-en-3-one + O2 = 3-(methylsulfanyl)propanoate + CO + formate + 2 H(+). It functions in the pathway amino-acid biosynthesis; L-methionine biosynthesis via salvage pathway; L-methionine from S-methyl-5-thio-alpha-D-ribose 1-phosphate: step 5/6. Functionally, catalyzes 2 different reactions between oxygen and the acireductone 1,2-dihydroxy-3-keto-5-methylthiopentene (DHK-MTPene) depending upon the metal bound in the active site. Fe-containing acireductone dioxygenase (Fe-ARD) produces formate and 2-keto-4-methylthiobutyrate (KMTB), the alpha-ketoacid precursor of methionine in the methionine recycle pathway. Ni-containing acireductone dioxygenase (Ni-ARD) produces methylthiopropionate, carbon monoxide and formate, and does not lie on the methionine recycle pathway. This is Acireductone dioxygenase from Drosophila pseudoobscura pseudoobscura (Fruit fly).